Here is an 883-residue protein sequence, read N- to C-terminus: Phosphoenolpyruvate carboxylase (883 aa).

Residues H138 and K546 contribute to the active site.

Belongs to the PEPCase type 1 family. Mg(2+) is required as a cofactor.

The catalysed reaction is oxaloacetate + phosphate = phosphoenolpyruvate + hydrogencarbonate. Its function is as follows. Forms oxaloacetate, a four-carbon dicarboxylic acid source for the tricarboxylic acid cycle. In Escherichia coli O81 (strain ED1a), this protein is Phosphoenolpyruvate carboxylase.